A 313-amino-acid polypeptide reads, in one-letter code: MSRPSSAGPCASKPCGKQKQPPPPPPHAPSLPATISGGPGASAPPAPTAAAITGPLSQQHQELTSLFECPVCFDYVLPPILQCQAGHLVCNQCRQKLSCCPTCRASLTPSIRNLAMEKVASAVLFPCKYASTGCSLSLHHTEKPEHEDICEYRPYSCPCPGASCKWQGSLENVMQHLTHSHKSITTLQGEDIVFLATDINLPGAVDWVMMQYCFNHHFMLVLEKQEKYEGHQQFFAIVLLIGTRKQAENYAYRLELNGNRRRLTWEATPRSIHDGVAAAIMNSDCLVFDTAIAHLFADNGNLGINVTISTCCP.

Residues 1–49 (MSRPSSAGPCASKPCGKQKQPPPPPPHAPSLPATISGGPGASAPPAPTA) form a disordered region. The segment covering 20–29 (QPPPPPPHAP) has biased composition (pro residues). An RING-type zinc finger spans residues 69–104 (CPVCFDYVLPPILQCQAGHLVCNQCRQKLSCCPTCR). Residues 119–311 (VASAVLFPCK…LGINVTISTC (193 aa)) are SBD. The SIAH-type zinc-finger motif lies at 122-182 (AVLFPCKYAS…VMQHLTHSHK (61 aa)). The Zn(2+) site is built by Cys127, Cys134, His146, Cys150, Cys157, Cys164, His176, and His181.

The protein belongs to the SINA (Seven in absentia) family. Homodimer. As to expression, widely expressed in early embryos until stage 40. It is then expressed in brain, spinal cord and in the developing and mature eye.

The protein localises to the cytoplasm. It carries out the reaction S-ubiquitinyl-[E2 ubiquitin-conjugating enzyme]-L-cysteine + [acceptor protein]-L-lysine = [E2 ubiquitin-conjugating enzyme]-L-cysteine + N(6)-ubiquitinyl-[acceptor protein]-L-lysine.. The protein operates within protein modification; protein ubiquitination. Its function is as follows. E3 ubiquitin-protein ligase that mediates ubiquitination and subsequent proteasomal degradation of target proteins. E3 ubiquitin ligases accept ubiquitin from an E2 ubiquitin-conjugating enzyme in the form of a thioester and then directly transfers the ubiquitin to targeted substrates. Involved in eye morphogenesis, probably triggers the ubiquitin-mediated degradation of different substrates. May play a role in the regulation of the cellular clock function. The protein is E3 ubiquitin-protein ligase siah2 (siah2) of Xenopus laevis (African clawed frog).